Reading from the N-terminus, the 561-residue chain is Zinc finger protein 394 (561 aa).

Positions 1-61 (MNSSLTAQRR…NYPAASPDPE (61 aa)) are disordered. At Ser12 the chain carries Phosphoserine. Lys40 is covalently cross-linked (Glycyl lysine isopeptide (Lys-Gly) (interchain with G-Cter in SUMO2)). An SCAN box domain is found at 64–146 (RLHFRQLRYQ…AVVRALQRAL (83 aa)). Positions 155-230 (VTFEDTAVSL…LQEAFQGKRP (76 aa)) constitute a KRAB domain. The interval 182–201 (ESAQKDSGSTVPPSLESRVE) is disordered. Residues Lys203 and Lys228 each participate in a glycyl lysine isopeptide (Lys-Gly) (interchain with G-Cter in SUMO2) cross-link. Residues 231–285 (LFSKCGSTHEDRVEKQSGDPLPLKLENSPEAEGLNSISDVNKNGSIEGEDSKNNE) are disordered. Basic and acidic residues predominate over residues 237–247 (STHEDRVEKQS). Lys254 is covalently cross-linked (Glycyl lysine isopeptide (Lys-Gly) (interchain with G-Cter in SUMO2)). Residues 265 to 274 (NSISDVNKNG) show a composition bias toward polar residues. Lys282 participates in a covalent cross-link: Glycyl lysine isopeptide (Lys-Gly) (interchain with G-Cter in SUMO2). C2H2-type zinc fingers lie at residues 358–380 (YKCG…QRIH), 386–408 (YGCQ…QRTH), 414–436 (YTCL…QSTH), 442–463 (FKCE…QRLH), 469–491 (YKCE…HRIH), 497–519 (YGCS…QRIH), and 525–547 (YKCL…QRIH). Residue Lys443 forms a Glycyl lysine isopeptide (Lys-Gly) (interchain with G-Cter in SUMO2) linkage.

Belongs to the krueppel C2H2-type zinc-finger protein family.

It is found in the nucleus. Its function is as follows. May be involved in transcriptional regulation. The protein is Zinc finger protein 394 (ZNF394) of Homo sapiens (Human).